The primary structure comprises 100 residues: MPLDNSFPLSQLSKVSERVLEIHLELLDTKSKLNDIYKDICELQRFTEQLINDDDLRESYVSSKPELSKNWEKLKKEIEQKHKEIQELISEFDNMFINSF.

Positions 65–96 form a coiled coil; that stretch reads PELSKNWEKLKKEIEQKHKEIQELISEFDNMF.

This is an uncharacterized protein from Acidianus filamentous virus 2 (isolate Italy/Pozzuoli) (AFV-2).